Here is a 616-residue protein sequence, read N- to C-terminus: Chaperone protein HscA (616 aa).

The protein belongs to the heat shock protein 70 family.

In terms of biological role, chaperone involved in the maturation of iron-sulfur cluster-containing proteins. Has a low intrinsic ATPase activity which is markedly stimulated by HscB. Involved in the maturation of IscU. The polypeptide is Chaperone protein HscA (Salmonella typhimurium (strain LT2 / SGSC1412 / ATCC 700720)).